The sequence spans 862 residues: AP-1 complex subunit gamma-2 (862 aa).

HEAT repeat units follow at residues 1–28 (MNPF…EERA), 29–65 (VVRK…LGYP), 101–136 (EVLM…CSAE), 137–173 (MARD…KVPD), 308–345 (GLRV…VDSQ), 346–382 (AVQR…ENNV), 384–417 (PLAK…KFAP), 418–454 (EKIW…NAPD), 458–496 (YTVR…NNAG), 507–545 (TESD…RFPS), and 560–599 (SFVL…ATFS). The region spanning 744–859 (AAYPSIVAFE…LEEGQINNFP (116 aa)) is the GAE domain.

This sequence belongs to the adaptor complexes large subunit family. Adaptor protein complex 1 (AP-1) is a heterotetramer composed of two large adaptins (gamma-type subunit and beta-type subunit), a medium adaptin (mu-type subunit) and a small adaptin (sigma-type subunit).

It is found in the golgi apparatus. The protein resides in the cytoplasmic vesicle. It localises to the clathrin-coated vesicle membrane. Its function is as follows. Subunit of clathrin-associated adaptor protein complex 1 that plays a role in protein sorting at the trans-Golgi network and early endosomes (TGN/EE). The AP complexes mediate both the recruitment of clathrin to membranes and the recognition of sorting signals within the cytosolic tails of transmembrane cargo molecules. The protein is AP-1 complex subunit gamma-2 of Arabidopsis thaliana (Mouse-ear cress).